The following is a 57-amino-acid chain: Large ribosomal subunit protein bL32 (57 aa).

Residues 1-20 (MAVPKRRMSRSNTRSRRAQW) are compositionally biased toward basic residues. The interval 1–22 (MAVPKRRMSRSNTRSRRAQWKA) is disordered.

The protein belongs to the bacterial ribosomal protein bL32 family.

This is Large ribosomal subunit protein bL32 from Mycobacterium sp. (strain JLS).